We begin with the raw amino-acid sequence, 189 residues long: Molybdopterin synthase catalytic subunit (189 aa).

A Phosphoserine modification is found at Ser20. Substrate contacts are provided by residues 143-144 (HR), Lys159, and 166-168 (KKE).

It belongs to the MoaE family. MOCS2B subfamily. Heterotetramer; composed of 2 small (MOCS2A) and 2 large (MOCS2B) subunits.

The protein localises to the cytoplasm. It is found in the cytosol. It carries out the reaction 2 [molybdopterin-synthase sulfur-carrier protein]-C-terminal-Gly-aminoethanethioate + cyclic pyranopterin phosphate + H2O = molybdopterin + 2 [molybdopterin-synthase sulfur-carrier protein]-C-terminal Gly-Gly + 2 H(+). The protein operates within cofactor biosynthesis; molybdopterin biosynthesis. In terms of biological role, catalytic subunit of the molybdopterin synthase complex, a complex that catalyzes the conversion of precursor Z into molybdopterin. Acts by mediating the incorporation of 2 sulfur atoms from thiocarboxylated MOCS2A into precursor Z to generate a dithiolene group. The chain is Molybdopterin synthase catalytic subunit from Bos taurus (Bovine).